The primary structure comprises 122 residues: Small ribosomal subunit protein uS13 (122 aa).

The tract at residues 94–122 (SLPVRGQRTKTNARTRKVHVSRSKNSRGK) is disordered.

It belongs to the universal ribosomal protein uS13 family. As to quaternary structure, part of the 30S ribosomal subunit. Forms a loose heterodimer with protein S19. Forms two bridges to the 50S subunit in the 70S ribosome.

Located at the top of the head of the 30S subunit, it contacts several helices of the 16S rRNA. In the 70S ribosome it contacts the 23S rRNA (bridge B1a) and protein L5 of the 50S subunit (bridge B1b), connecting the 2 subunits; these bridges are implicated in subunit movement. Contacts the tRNAs in the A and P-sites. The protein is Small ribosomal subunit protein uS13 of Haemophilus influenzae (strain ATCC 51907 / DSM 11121 / KW20 / Rd).